Consider the following 447-residue polypeptide: GTPase Der (447 aa).

2 EngA-type G domains span residues 3 to 167 and 180 to 353; these read PVIA…ALPE and IRLA…KSAN. Residues 9-16, 56-60, 119-122, 186-193, 233-237, and 298-301 contribute to the GTP site; these read GRPNVGKS, DTGGF, NKAE, DTAGL, and NKWD. The KH-like domain occupies 354–438; it reads RKMPTPVLTR…PLRIEMKTSS (85 aa).

It belongs to the TRAFAC class TrmE-Era-EngA-EngB-Septin-like GTPase superfamily. EngA (Der) GTPase family. Associates with the 50S ribosomal subunit.

GTPase that plays an essential role in the late steps of ribosome biogenesis. The polypeptide is GTPase Der (Acidovorax ebreus (strain TPSY) (Diaphorobacter sp. (strain TPSY))).